The sequence spans 147 residues: SsrA-binding protein (147 aa).

This sequence belongs to the SmpB family.

It localises to the cytoplasm. Its function is as follows. Required for rescue of stalled ribosomes mediated by trans-translation. Binds to transfer-messenger RNA (tmRNA), required for stable association of tmRNA with ribosomes. tmRNA and SmpB together mimic tRNA shape, replacing the anticodon stem-loop with SmpB. tmRNA is encoded by the ssrA gene; the 2 termini fold to resemble tRNA(Ala) and it encodes a 'tag peptide', a short internal open reading frame. During trans-translation Ala-aminoacylated tmRNA acts like a tRNA, entering the A-site of stalled ribosomes, displacing the stalled mRNA. The ribosome then switches to translate the ORF on the tmRNA; the nascent peptide is terminated with the 'tag peptide' encoded by the tmRNA and targeted for degradation. The ribosome is freed to recommence translation, which seems to be the essential function of trans-translation. This is SsrA-binding protein from Mycoplasmopsis agalactiae (strain NCTC 10123 / CIP 59.7 / PG2) (Mycoplasma agalactiae).